Reading from the N-terminus, the 364-residue chain is Chorismate synthase (364 aa).

The interval 41-60 is disordered; sequence MQHDLDRRRPGTSRYTTARR. Residues arginine 48 and arginine 54 each contribute to the NADP(+) site. Residues 125 to 127, 238 to 239, glycine 278, 293 to 297, and arginine 319 each bind FMN; these read RSS, NA, and KPTSS.

This sequence belongs to the chorismate synthase family. In terms of assembly, homotetramer. FMNH2 serves as cofactor.

The enzyme catalyses 5-O-(1-carboxyvinyl)-3-phosphoshikimate = chorismate + phosphate. Its pathway is metabolic intermediate biosynthesis; chorismate biosynthesis; chorismate from D-erythrose 4-phosphate and phosphoenolpyruvate: step 7/7. In terms of biological role, catalyzes the anti-1,4-elimination of the C-3 phosphate and the C-6 proR hydrogen from 5-enolpyruvylshikimate-3-phosphate (EPSP) to yield chorismate, which is the branch point compound that serves as the starting substrate for the three terminal pathways of aromatic amino acid biosynthesis. This reaction introduces a second double bond into the aromatic ring system. The chain is Chorismate synthase from Shewanella putrefaciens (strain CN-32 / ATCC BAA-453).